The following is a 357-amino-acid chain: Membrane-bound lytic murein transglycosylase C (357 aa).

The first 16 residues, 1–16 (MKKILPLVIIAPLLIS), serve as a signal peptide directing secretion. A lipid anchor (N-palmitoyl cysteine) is attached at cysteine 17. Cysteine 17 is lipidated: S-diacylglycerol cysteine.

This sequence belongs to the transglycosylase Slt family.

The protein localises to the cell outer membrane. It carries out the reaction Exolytic cleavage of the (1-&gt;4)-beta-glycosidic linkage between N-acetylmuramic acid (MurNAc) and N-acetylglucosamine (GlcNAc) residues in peptidoglycan, from either the reducing or the non-reducing ends of the peptidoglycan chains, with concomitant formation of a 1,6-anhydrobond in the MurNAc residue.. Its function is as follows. Murein-degrading enzyme. May play a role in recycling of muropeptides during cell elongation and/or cell division. The protein is Membrane-bound lytic murein transglycosylase C of Sodalis glossinidius (strain morsitans).